The chain runs to 364 residues: Esculetin O-methyltransferase (364 aa).

A bergaptol-binding site is contributed by asparagine 132. S-adenosyl-L-homocysteine contacts are provided by glycine 209, aspartate 232, aspartate 252, methionine 253, methionine 265, and lysine 266. Bergaptol is bound at residue histidine 270. Histidine 270 functions as the Proton acceptor in the catalytic mechanism.

The protein belongs to the class I-like SAM-binding methyltransferase superfamily. Cation-independent O-methyltransferase family. COMT subfamily. As to quaternary structure, homodimer. As to expression, expressed ubiquitously.

It carries out the reaction bergaptol + S-adenosyl-L-methionine = bergapten + S-adenosyl-L-homocysteine. The catalysed reaction is xanthotoxol + S-adenosyl-L-methionine = xanthotoxin + S-adenosyl-L-homocysteine + H(+). It catalyses the reaction esculetin + S-adenosyl-L-methionine = isoscopoletin + S-adenosyl-L-homocysteine + H(+). The enzyme catalyses esculetin + S-adenosyl-L-methionine = scopoletin + S-adenosyl-L-homocysteine + H(+). The protein operates within aromatic compound metabolism. It participates in secondary metabolite biosynthesis. With respect to regulation, inhibited by zinc Zn(2+), copper Cu(2+) and silver Ag(+) ions. Functionally, O-methyltransferase involved in the biosynthesis of methoxylated coumarins natural products such as isoscopoletin, scopoletin, xanthotoxin and bergapten, photosensitizers used for medical purpose such as treating psoriasis and vitiligo or facilitating resistance to microbial infection and other stresses. Catalyzes the methylation of esculetin, bergaptol and xanthotoxol, but seems inactive on scopoletin and isoscopoletin. The chain is Esculetin O-methyltransferase from Kitagawia praeruptora (Peucedanum praeruptorum).